A 322-amino-acid polypeptide reads, in one-letter code: GDSL esterase/lipase At2g04020 (322 aa).

A signal peptide spans 1–26; sequence MGLPSSLESYLLLILLSFLNVSTIYS. Ser-50 serves as the catalytic Nucleophile. N-linked (GlcNAc...) asparagine glycosylation is present at Asn-260. Residues Asp-296 and His-299 contribute to the active site.

It belongs to the 'GDSL' lipolytic enzyme family.

The protein localises to the secreted. This is GDSL esterase/lipase At2g04020 from Arabidopsis thaliana (Mouse-ear cress).